A 152-amino-acid polypeptide reads, in one-letter code: SsrA-binding protein (152 aa).

The protein belongs to the SmpB family.

It is found in the cytoplasm. Its function is as follows. Required for rescue of stalled ribosomes mediated by trans-translation. Binds to transfer-messenger RNA (tmRNA), required for stable association of tmRNA with ribosomes. tmRNA and SmpB together mimic tRNA shape, replacing the anticodon stem-loop with SmpB. tmRNA is encoded by the ssrA gene; the 2 termini fold to resemble tRNA(Ala) and it encodes a 'tag peptide', a short internal open reading frame. During trans-translation Ala-aminoacylated tmRNA acts like a tRNA, entering the A-site of stalled ribosomes, displacing the stalled mRNA. The ribosome then switches to translate the ORF on the tmRNA; the nascent peptide is terminated with the 'tag peptide' encoded by the tmRNA and targeted for degradation. The ribosome is freed to recommence translation, which seems to be the essential function of trans-translation. This is SsrA-binding protein from Sulfurihydrogenibium sp. (strain YO3AOP1).